A 338-amino-acid polypeptide reads, in one-letter code: Peptidoglycan deacetylase-like protein FGM2 (338 aa).

Zn(2+) contacts are provided by aspartate 49, histidine 124, and histidine 128. Residues 65 to 257 (LSDYSAGIFA…VTNSHGFVSS (193 aa)) enclose the NodB homology domain.

The protein belongs to the polysaccharide deacetylase family.

In terms of biological role, peptidoglycan deacetylase-like protein; part of the Fg3_54/C64 gene cluster that mediates the biosynthesis of the octapeptide fusaoctaxin A, a virulence factor that is required for cell-to-cell invasiveness of plant host. The 2 nonribosomal peptide synthetases NRPS9 and NRPS5 form an assembly line which likely utilizes GABA as a starter unit (loaded on the unique module M1 of NRPS9) and sequentially incorporates seven extender units composed of the residues L-Ala, L-allo-Ile, L-Ser, L-Val, L-Ser, L-Leu and L-Leu, respectively. During the process, each of the residues that are tethered on modules M3-M7 of NRPS5 containing an E domain can undergo an epimerization reaction to produce a D-configuration before the transpeptidation reaction occurs. The elongation of the peptidyl chain might be terminated by module M8-mediated L-Leu incorporation, followed by R domain-catalyzed 4 electron reduction to release the resulting octapeptide from the assembly line as an alcohol. Fusaoctaxin A is cleaved by the cluster specific ABC transporter FGM5 to the pentapeptide fusapentaxin A and the tripeptide fusatrixin A. The other enzymes from the cluster, FGM1, FGM2, FGM3 and FGM9 seem not to be involved in the biosynthesis of fusaoctaxin A and their functions have still to be determined. The protein is Peptidoglycan deacetylase-like protein FGM2 of Gibberella zeae (strain ATCC MYA-4620 / CBS 123657 / FGSC 9075 / NRRL 31084 / PH-1) (Wheat head blight fungus).